Here is a 914-residue protein sequence, read N- to C-terminus: Translation initiation factor IF-2 (914 aa).

Residues 58 to 160 form a disordered region; the sequence is KTEKKQTAKK…EAEPKIEVMP (103 aa). Over residues 70–91 the composition is skewed to basic and acidic residues; the sequence is KKDTVKKDTVKKTAVKKDDSKA. Positions 92-103 are enriched in basic residues; it reads AKKTKPIAKKSA. Positions 104–160 are enriched in basic and acidic residues; the sequence is PKTEKKVEKKVESKISKPDNEILEAKPEISKPEIKAEPKKEEIEQKQEAEPKIEVMP. The 170-residue stretch at 413-582 folds into the tr-type G domain; that stretch reads ERVPVITIMG…LLQADLLELK (170 aa). The G1 stretch occupies residues 422-429; the sequence is GHVDHGKT. 422-429 provides a ligand contact to GTP; it reads GHVDHGKT. Positions 447–451 are G2; sequence GITQH. The G3 stretch occupies residues 468-471; sequence DTPG. GTP contacts are provided by residues 468-472 and 522-525; these read DTPGH and NKMD. Residues 522–525 are G4; the sequence is NKMD. Residues 558–560 are G5; sequence SAK.

Belongs to the TRAFAC class translation factor GTPase superfamily. Classic translation factor GTPase family. IF-2 subfamily.

The protein resides in the cytoplasm. In terms of biological role, one of the essential components for the initiation of protein synthesis. Protects formylmethionyl-tRNA from spontaneous hydrolysis and promotes its binding to the 30S ribosomal subunits. Also involved in the hydrolysis of GTP during the formation of the 70S ribosomal complex. The polypeptide is Translation initiation factor IF-2 (Campylobacter hominis (strain ATCC BAA-381 / DSM 21671 / CCUG 45161 / LMG 19568 / NCTC 13146 / CH001A)).